The primary structure comprises 342 residues: MARVISMSDAINEAMKLAMRKDENVLLIGEDVAGGAAVDHLQDDEAWGGVLGVTKGLVQEFGRTRVLDTPISEAGYMGAAMAAASTGLRPIAELMFNDFIGTCFDQVINQGAKFRYMFGGKAQVPITVRTTYGAGFRAAAQHSQSLYGLFTSIPGLKTVVPSNPYDAKGLLLAAIEDNDPVFFFEDKTSYNMKGEVPEDYYTIPLGKADIKREGNDVTLFAVGKQVNTALEAAAQLSERGIEAEVLDPRSLSPLDEDAIFTSLEKTNRLIIIDEANPRCSIATDIAALVADKGFDLLDAPIKRITAPHTPVPFSPVLEDQYLPTPDKIVSVTLELLGEPALN.

As to quaternary structure, tetramer of 2 alpha and 2 beta subunits.

Its pathway is ketone degradation; acetoin degradation. Functionally, catalyzes the 2,6-dichlorophenolindophenol-dependent cleavage of acetoin into acetate and acetaldehyde. This is Acetoin:2,6-dichlorophenolindophenol oxidoreductase subunit beta (acoB) from Bacillus subtilis (strain 168).